A 301-amino-acid polypeptide reads, in one-letter code: MSDRAQPSASEPVRNIVLVGPTGNGKSSTGNSLIGKEVFILETVECKTCKAKTLDGQIINVIDTPGLFDLSVSTDYMNKEIINCLTLTDGGLHAVVLVLSVGTDILKEEEAALNKLQLLFGSKIVDYLVVLFTGGDVLEKENKTLDDYLSRGCPEFLKTVLRLCGGRRVLFNNKTTDEVKKIEQVKQLLAHVEAIENLNGGKALFTEENDLNEKRQGEMLMEQEMEVQSKKPENTEVEEMKKQLEISYGQQMNMMAQMVEDTLKESSASHERMLLALKDKVERSYLENEDMHNETKRCNIL.

Positions 11 to 214 constitute an AIG1-type G domain; sequence EPVRNIVLVG…FTEENDLNEK (204 aa). The segment at 20–27 is G1; that stretch reads GPTGNGKS. 20–28 is a GTP binding site; that stretch reads GPTGNGKSS. The G2 stretch occupies residues 46 to 50; that stretch reads CKTCK. The interval 63–66 is G3; it reads DTPG. The tract at residues 133–136 is G4; it reads TGGD. The interval 172–174 is G5; sequence NNK. Asn173 contacts GTP.

This sequence belongs to the TRAFAC class TrmE-Era-EngA-EngB-Septin-like GTPase superfamily. AIG1/Toc34/Toc159-like paraseptin GTPase family. IAN subfamily. As to expression, expressed in pollen, cotyledons and lateral roots.

The protein is Immune-associated nucleotide-binding protein 5 of Arabidopsis thaliana (Mouse-ear cress).